The sequence spans 179 residues: Large ribosomal subunit protein uL5 (179 aa).

The protein belongs to the universal ribosomal protein uL5 family. As to quaternary structure, part of the 50S ribosomal subunit; part of the 5S rRNA/L5/L18/L25 subcomplex. Contacts the 5S rRNA and the P site tRNA. Forms a bridge to the 30S subunit in the 70S ribosome.

Its function is as follows. This is one of the proteins that bind and probably mediate the attachment of the 5S RNA into the large ribosomal subunit, where it forms part of the central protuberance. In the 70S ribosome it contacts protein S13 of the 30S subunit (bridge B1b), connecting the 2 subunits; this bridge is implicated in subunit movement. Contacts the P site tRNA; the 5S rRNA and some of its associated proteins might help stabilize positioning of ribosome-bound tRNAs. The sequence is that of Large ribosomal subunit protein uL5 from Halothermothrix orenii (strain H 168 / OCM 544 / DSM 9562).